Reading from the N-terminus, the 919-residue chain is Alanine--tRNA ligase (919 aa).

The Zn(2+) site is built by His-565, His-569, Cys-667, and His-671.

The protein belongs to the class-II aminoacyl-tRNA synthetase family. It depends on Zn(2+) as a cofactor.

It localises to the cytoplasm. The enzyme catalyses tRNA(Ala) + L-alanine + ATP = L-alanyl-tRNA(Ala) + AMP + diphosphate. Its function is as follows. Catalyzes the attachment of alanine to tRNA(Ala) in a two-step reaction: alanine is first activated by ATP to form Ala-AMP and then transferred to the acceptor end of tRNA(Ala). Also edits incorrectly charged Ser-tRNA(Ala) and Gly-tRNA(Ala) via its editing domain. This chain is Alanine--tRNA ligase, found in Leptospira biflexa serovar Patoc (strain Patoc 1 / Ames).